A 204-amino-acid polypeptide reads, in one-letter code: Serotype 3 fimbrial subunit (204 aa).

The signal sequence occupies residues 1-25 (MSKFSYPALRAALILAASPVLPALA). Cysteine 41 and cysteine 84 are oxidised to a cystine.

The protein belongs to the fimbrial protein family.

It is found in the fimbrium. Bordetella pertussis is the causative agent of whooping cough. An essential step in the disease process is the attachment of the bacteria to the ciliated epithelium of the respiratory tract, enabling the organism to resist normal host-clearance mechanisms. It is unclear which bacterial cell surface component are responsible for adherence but the fimbriae of B.pertussis are prime candidates for being involved in this process. The protein is Serotype 3 fimbrial subunit (fim3) of Bordetella pertussis (strain Tohama I / ATCC BAA-589 / NCTC 13251).